We begin with the raw amino-acid sequence, 804 residues long: E3 UFM1-protein ligase 1 homolog (804 aa).

Methionine 1 carries the post-translational modification N-acetylmethionine. The segment at 397–483 is disordered; sequence IHPSSKSSES…VKAQESNNII (87 aa). Over residues 400 to 409 the composition is skewed to low complexity; it reads SSKSSESTES. A compositionally biased stretch (basic and acidic residues) spans 463 to 475; sequence LDSKAGGKKESVK.

It belongs to the UFL1 family.

Functionally, E3 UFM1-protein ligase that mediates ufmylation of target proteins. In Arabidopsis thaliana (Mouse-ear cress), this protein is E3 UFM1-protein ligase 1 homolog.